Here is a 3527-residue protein sequence, read N- to C-terminus: MKWGTLLKDLKDKVGVAETTADLIAGEAISDPTTPPSSSQASPSSSFAALAQHDFNLLSPTSRDKLKLELDFKRYWEEFRSSSSEQEKEAALNLSVNTFCRLVKQHANVDQLVTMLVEPHIFSFVIGRAFVADVEKLKVSSRKRSLDVEKAIEFFSEVTKDGSSHGANLLTAIEVLASGPFDKQSLLDSGILCCLIHTFNAFLTYSVASEGEKTVNYEEKVEGSVVNIMKALASHPSAAQSLIEDDSLQLLFKMVANGSLMAFSRFKVGLVSFHNIQLHKNAMQILGLLLVNDNGSTASYIRKHHLIKVLLMAVKDFDPDCGDSAYTVGIVDLLLECVELSYRPETGGVRLKDDIRNAHGYHFLVQFALILSSMPKDIVFAFDHSSPHKNRGSNDSKKQPPLSLKTRQNDDSEKQQSLSLNSRQNDEFALKHFSPALSRLLDVLVTLAQTGPIESSGTSTSLLSQTKLTGYSRRQTPSANNRYDEPCEQGSGKVKDLEAVQMLQDIFLKAENKDLQAEVLNRMFKIFTSHLENYRICQELKTVPLLVLNMGGFPSSLQELILKILEYAVTVVNCVPEQELLSLCFLLQQPIDSELKHTILSFFVKLTSFDQQYKKVLGEVGVLEVLQDDLKQHKLLRGPDQYSGVSNHLDRVPSSPSFKQHLDSQDAIISSPKLMESGSGKLPIFEVERTITVGWDCMISLLKNSQVNQEAFRSANGVTVILPFLIADEHRTSILRIFSCLITGDIKQVHHEELEALIDVLKSGMVTRVSGDQYKLHYEVRCDIMGALWRIVGVNGSAQRVFGEATGFSLLLTTLHTFQGEEECRDESHLMVYIKLFKHLLRLITTAVCENAINRMKLHSVITSQTFYDLLVESGLLCVDLERHVIQLLLELALEVLVPPFLTSESMASAEMAECEKASFLVKTASGQFNPDKQKIYNAGAVRVLIRSLLLCTPKLQLEFLNLLERLARASPFNKETLTSAGCVELLLEIIYPFLQGSSPFLSHALKIVEVLGAYRLSPSELKMLCRYVMQMRVMNSGPSLIGMMEKLILMEEDTGLECVSLAPFVEMDMSKTGHASVQVSLGERSWPPAAGYSFVCWVQFRNFLTTQELESEVYKAGGSSKTPILSGQQSEQNIFRIFSVNAISNGSPSYAELYFQEDGILTLATSNSNSLSFSGLETEEGKWHHLAVVHSKPNALAGLFQASVAYVYIDGKLRHMGKLGYSPSPVGKSLQVIIGTSATCARACGGDSMAILDLLDTDMSSGIQKFEDSNRQGDSKAHCSGIVWDLDRLGNLSIQLPGKKLIFAFDGTCSEFMRATGSFSLVNLVDPLSAAASLIGGIPRFGRLVGNVSLCRQNVIGNSIRPVGGMAVVLALVEAAESRDMLHMALSLLACALHQNSQNVKDMETYTGYHLLALFLRPKMALFDMQCLEIFFQISACEAFFSEPKKLESGQTTISMSPTEIIPENNYEDPTLCKFQYETSSVGSHGDMDDFSGRKDSFSHLSELEMGDNPVETSNCIVLSNADMVEHVLLDWTLWVTAPVSIQIASLGFLENLISILWYRSHNLAILRQINLVKHLLVTLQRGDVEVLVLEKLVILLRCILENGFLTPELEDVVRFAIMTFNPPEIKSQNSSMRESMGKHVIVRNLVLEMLIDLQVTIKAEELLEQWHKTVSSKLITYFLDGAVHPSSMRWIMTLLGVCLTSSPNFSLKFFASGGYQGLVRVLQSFYDSPDIYYILFCLIFGKPVYPRLPEVRMLDFHALMPDDGSHVELNFVDLLDSVVAMAKSTFDRLIMQSMLAHQSGNLSQVSARCVAELVEGYADMTGELQGKALMHKTYAARLMGGEASAPATATSVIRFMVDLAKMCPQFSAACKNTEFLQKCADLYFSCVRAFHAVKLAKQLSMKAEEQNITGGDDSSVEGNFCRVSHQDMSTKTSISAGSFPQDQTSSVISVDMYIPSDYVAVDKVENFLTTPPGESNKSFQGREYIAKQDGDHVGSVSASSEMKSLDLTGSSSQVQPIDSRSSESFSMLESPLLSEKSSLEVPFIPSPSKSSTISTPHPSHISVSEFDASSDQSSGSQGSSAVHTLFTISPKVLLETDESGYGGGPCSAGASAVLDFMAEVCADIMTEQIKAVQALESILEMLPLYVDPECVVVFQGLCLSRVMNYLERRFLRDDEEDDKKLDKRKWSANLDAFCWMIVDRVYMGAFPQPTGVLRTLEFLLSILQLANKDGRVEEVTSSGKGLLSIGRATRQLDAYVHSILKNTNRTILYCFLPSFLITIGEEDLPSRLGLLVESTKKQTSKLSGKESGIDVSAVLQLLVANKNIILCPSNLDTDLNCCLCVNLISLLHDQRKNVQNMASNIIKYLLVHRKSALEDLLVKKPHRGQKFDVLHGGFDRLLTGNLPEFSKWLESSEQIITKVLEQGAAVMWIQYIAGSAKFPDVRMKGMDGRRTREMGRKLRDTSKLDLKHWEQVNERRYALEVVRDAMSAELRVVRQNKYGLILHAESVWPTHLQQLVHERGIFPMRISHGVEDLKWQLCPIEGPYRMRKKLERCKLKIDSLHNLLEGKLELGEIELLKSKSEDGLVISDMDSEPAFLLSELYSESFSEEADDLKDVPSARNGWNNDRATSTNAASLHNSLSFGGKSSSTAVSVPISVNTDEKSETGSPIKSSSGKMDEIKHVEEESEKELKDDGEYLIRPYLEHLEKIRFRYNCERVVGLDKHDGIFLIGELCLYVIENFYIDDHGCICEKECEDELSIIDQAQGLKKQFHGSLESKSKSSTLWSTTIKIGAVGGRAWAYGGGAWGKEKVRVTGNLPHPWHMWKLDSVHEILKRDYELRRVAVEIFSMDGCNDLLVFHKKEREEVFRNLLAMNLPRNSMLDTTISGSAKQESKEGSRLFKLMAKSFTKRWQNGEISNFQYLMHLNTLAGRGYSDLTQYPVFPWILADYDGESLDLSDPNNFRKLDKPMGCQTPEGEEEFRKRYESWDDPEVPQFHYGSHYSSAGIVLFYLIRLPPFSAENQKLQGGQFDHADRLFNSIRETWLSAAGKGNTSDVKELIPEFFYMPEFLENRFNLDLGEKQSGDKVGDVILPPWARGSVREFIRKHREALESDYVSENLHHWIDLIFGHKQRGKAAENAVNVFYHYTYEGNVDVDAVTDPAMKASILAQINHFGQTPKQLFQKPHVKRRTDRKVPPHPLKHSMHLVPRNIRKCSSSINQIITFNDKLLLTGANCLLKPRGYKKYIRWGFPDRTLRFMSYDQDKLLSTHENLHEGNQIQCAGVSHDGRIVVTGAEDGLVSVWRVSKDGPRGSRRLRLEKSLCAHTAKVICLRVSQPYMMIASSSDDCTVIIWDLSSLSFVRQLPNFSVPVTVVYINDLTGEIVTAAGSVLAVWSINGDCLSVVNTSQLPTDLIVSVAGSTFSDWLETTWYVTGHQSGALKVWRMVHCTDPVSVPSKTPSNRTGGLNLGNQKPEYKLLLHKELKFHKQPVTSLHLTTDLKQLLSGDSAGHLLSWTVPDEILKASLKKAS.

Disordered regions lie at residues 25–46 (AGEA…PSSS), 385–423 (SSPH…LNSR), and 454–490 (ESSG…CEQG). Positions 28–46 (AISDPTTPPSSSQASPSSS) are enriched in low complexity. Low complexity predominate over residues 455-469 (SSGTSTSLLSQTKLT). Polar residues predominate over residues 472-481 (SRRQTPSANN). 5 LRR repeats span residues 1447 to 1470 (KLES…NYED), 1499 to 1522 (FSHL…VLSN), 1542 to 1565 (SIQI…SHNL), 1566 to 1588 (AILR…DVEV), and 2001 to 2024 (SSEM…SRSS). Disordered regions lie at residues 1992 to 2023 (GDHV…DSRS) and 2046 to 2081 (IPSP…SQGS). Residues 1998 to 2020 (VSASSEMKSLDLTGSSSQVQPID) are compositionally biased toward polar residues. LRR repeat units lie at residues 2128–2151 (TEQI…VDPE), 2221–2247 (LLSI…LLSI), and 2313–2336 (VSAV…LDTD). The segment at 2658–2680 (VNTDEKSETGSPIKSSSGKMDEI) is disordered. Positions 2666–2675 (TGSPIKSSSG) are enriched in polar residues. The 168-residue stretch at 2704-2871 (EHLEKIRFRY…EREEVFRNLL (168 aa)) folds into the BEACH-type PH domain. The 293-residue stretch at 2896–3188 (GSRLFKLMAK…QLFQKPHVKR (293 aa)) folds into the BEACH domain. WD repeat units follow at residues 3272–3311 (HEGN…PRGS), 3322–3361 (AHTA…FVRQ), 3410–3451 (DLIV…DPVS), and 3483–3522 (FHKQ…LKAS).

This chain is BEACH domain-containing protein A2, found in Arabidopsis thaliana (Mouse-ear cress).